The sequence spans 672 residues: SHC SH2 domain-binding protein 1 (672 aa).

An N-acetylalanine modification is found at Ala2. A Phosphoserine modification is found at Ser5. Thr7 carries the phosphothreonine modification. 5 positions are modified to phosphoserine: Ser31, Ser42, Ser44, Ser47, and Ser273. PbH1 repeat units lie at residues 428-451 (GADI…LIVH), 452-473 (RGKT…TVRT), 474-496 (SAEF…EIYP), 497-518 (GSQC…LIKD), and 526-548 (IPKI…VLVK). A Phosphoserine modification is found at Ser634.

As to quaternary structure, interacts directly with isoform p52shc of SHC1 via its SH2 domain. Interacts with TRIM71; leading to enhanced SHCBP1 protein stability. Interacts with both members of the centralspindlin complex, KIF23 and RACGAP1.

Its subcellular location is the midbody. It is found in the cytoplasm. The protein resides in the cytoskeleton. It localises to the spindle. Functionally, may play a role in signaling pathways governing cellular proliferation, cell growth and differentiation. May be a component of a novel signaling pathway downstream of Shc. Acts as a positive regulator of FGF signaling in neural progenitor cells. This is SHC SH2 domain-binding protein 1 (SHCBP1) from Homo sapiens (Human).